The primary structure comprises 106 residues: Large ribosomal subunit protein uL24 (106 aa).

This sequence belongs to the universal ribosomal protein uL24 family. As to quaternary structure, part of the 50S ribosomal subunit.

One of two assembly initiator proteins, it binds directly to the 5'-end of the 23S rRNA, where it nucleates assembly of the 50S subunit. Functionally, one of the proteins that surrounds the polypeptide exit tunnel on the outside of the subunit. The sequence is that of Large ribosomal subunit protein uL24 from Verminephrobacter eiseniae (strain EF01-2).